Consider the following 361-residue polypeptide: Phospho-N-acetylmuramoyl-pentapeptide-transferase (361 aa).

A run of 10 helical transmembrane segments spans residues 27 to 47 (GALF…ISLL), 72 to 92 (TPTM…LLWA), 99 to 119 (VWIT…DDYL), 139 to 159 (ALIA…GLAY), 169 to 189 (AIVN…VGAG), 200 to 220 (GLAI…AYLV), 240 to 260 (LAVV…FNAP), 264 to 284 (IFMG…VAVA), 289 to 309 (IVLA…IIQV), and 338 to 358 (QVVI…LATL).

Belongs to the glycosyltransferase 4 family. MraY subfamily. Mg(2+) is required as a cofactor.

It localises to the cell inner membrane. It carries out the reaction UDP-N-acetyl-alpha-D-muramoyl-L-alanyl-gamma-D-glutamyl-meso-2,6-diaminopimeloyl-D-alanyl-D-alanine + di-trans,octa-cis-undecaprenyl phosphate = di-trans,octa-cis-undecaprenyl diphospho-N-acetyl-alpha-D-muramoyl-L-alanyl-D-glutamyl-meso-2,6-diaminopimeloyl-D-alanyl-D-alanine + UMP. It functions in the pathway cell wall biogenesis; peptidoglycan biosynthesis. Catalyzes the initial step of the lipid cycle reactions in the biosynthesis of the cell wall peptidoglycan: transfers peptidoglycan precursor phospho-MurNAc-pentapeptide from UDP-MurNAc-pentapeptide onto the lipid carrier undecaprenyl phosphate, yielding undecaprenyl-pyrophosphoryl-MurNAc-pentapeptide, known as lipid I. This is Phospho-N-acetylmuramoyl-pentapeptide-transferase from Methylobacterium nodulans (strain LMG 21967 / CNCM I-2342 / ORS 2060).